Consider the following 336-residue polypeptide: tRNA (guanine(10)-N2)-dimethyltransferase (336 aa).

The 98-residue stretch at 50–147 (KILKKRLAYA…NDRFILTRRL (98 aa)) folds into the THUMP domain.

This sequence belongs to the methyltransferase superfamily. Trm-G10 family. In terms of assembly, monomer.

It localises to the cytoplasm. It carries out the reaction guanosine(10) in tRNA + 2 S-adenosyl-L-methionine = N(2)-dimethylguanosine(10) in tRNA + 2 S-adenosyl-L-homocysteine + 2 H(+). Catalyzes the adenosylmethionine-dependent methylation of the exocyclic amino group (N(2)) of guanosine at position 10 of various tRNAs. Acts via a two-step process that leads to the formation of either N(2)-monomethyl (m(2)G) or N(2)-dimethylguanosine (m(2)(2)G). This chain is tRNA (guanine(10)-N2)-dimethyltransferase (trmG10), found in Methanothermobacter thermautotrophicus (strain ATCC 29096 / DSM 1053 / JCM 10044 / NBRC 100330 / Delta H) (Methanobacterium thermoautotrophicum).